Consider the following 79-residue polypeptide: Exodeoxyribonuclease 7 small subunit (79 aa).

Belongs to the XseB family. As to quaternary structure, heterooligomer composed of large and small subunits.

The protein resides in the cytoplasm. The catalysed reaction is Exonucleolytic cleavage in either 5'- to 3'- or 3'- to 5'-direction to yield nucleoside 5'-phosphates.. Functionally, bidirectionally degrades single-stranded DNA into large acid-insoluble oligonucleotides, which are then degraded further into small acid-soluble oligonucleotides. The protein is Exodeoxyribonuclease 7 small subunit of Haemophilus influenzae (strain PittGG).